A 519-amino-acid polypeptide reads, in one-letter code: Golgi-associated kinase 1B (519 aa).

Residues 1–37 lie on the Cytoplasmic side of the membrane; it reads MTCPDKPGQLINWFICSLCVPRVRKLWSSRRPRTRRN. A helical; Signal-anchor for type II membrane protein transmembrane segment spans residues 38–55; that stretch reads LLLGTACAIYLGFLVSQV. At 56–519 the chain is on the extracellular side; the sequence is GRASLQHGQA…HGVKVLPMNE (464 aa). Residues 62-103 are disordered; it reads HGQAAEKGPHRSRDTAEPSFPEIPLDGTLAPPESQGNGSTLQ. The segment covering 68-77 has biased composition (basic and acidic residues); the sequence is KGPHRSRDTA. The N-linked (GlcNAc...) asparagine glycan is linked to N289.

The protein belongs to the GASK family.

It localises to the golgi apparatus membrane. The sequence is that of Golgi-associated kinase 1B from Homo sapiens (Human).